We begin with the raw amino-acid sequence, 352 residues long: C-C chemokine receptor type 5 (352 aa).

The Extracellular portion of the chain corresponds to 1 to 30 (MDYQVSSPTYDIDYYTSGPCQKINVKQIAA). Y3 carries the sulfotyrosine modification. S6 and S7 each carry an O-linked (GalNAc...) serine glycan. A sulfotyrosine mark is found at Y10, Y14, and Y15. 2 cysteine pairs are disulfide-bonded: C20–C269 and C101–C178. A helical transmembrane segment spans residues 31–58 (RLLPPLYSLVFIFGFVGNMLVILILINC). Residues 59–68 (KRLKSMTDIY) are Cytoplasmic-facing. A helical transmembrane segment spans residues 69 to 89 (LLNLAISDLFFLLTVPFWAHY). The Extracellular portion of the chain corresponds to 90–102 (AAAQWDFGNTMCQ). Residues 103-124 (LLTGLYFIGFFSGIFFIILLTI) traverse the membrane as a helical segment. Residues 125 to 141 (DRYLAIVHAVFALKART) lie on the Cytoplasmic side of the membrane. The chain crosses the membrane as a helical span at residues 142–166 (VTFGVVTSVITWVVAVFASLPGIIF). Topologically, residues 167–198 (TRSQKEGLHYTCSSHFPYSQYQFWKNFQTLKI) are extracellular. Residues 199–218 (VILGLVLPLLVMVICYSGIL) traverse the membrane as a helical segment. At 219 to 235 (KTLLRCRNEKKRHRAVR) the chain is on the cytoplasmic side. Residues 236–260 (LIFTIMIVYFLFWAPYNIVLLLNTF) traverse the membrane as a helical segment. The Extracellular segment spans residues 261-277 (QEFFGLNNCSSSNRLDQ). A helical transmembrane segment spans residues 278–301 (AMQVTETLGMTHCCINPIIYAFVG). At 302 to 352 (EKFRNYLLVFFQKHIAKHFCKCCSIFQQEAPERASSVYTRSTGEQEISVGL) the chain is on the cytoplasmic side. Residues C321, C323, and C324 are each lipidated (S-palmitoyl cysteine). S336, S337, S342, and S349 each carry phosphoserine; by BARK1.

The protein belongs to the G-protein coupled receptor 1 family. In terms of assembly, interacts with PRAF2. Efficient ligand binding to CCL3/MIP-1alpha and CCL4/MIP-1beta requires sulfation, O-glycosylation and sialic acid modifications. Glycosylation on Ser-6 is required for efficient binding of CCL4. Interacts with GRK2. Interacts with ARRB1 and ARRB2. Interacts with CNIH4. Interacts with S100A4; this interaction stimulates T-lymphocyte chemotaxis. Post-translationally, sulfated on at least 2 of the N-terminal tyrosines. Sulfation is required for efficient binding of the chemokines, CCL3 and CCL4. Palmitoylation in the C-terminal is important for cell surface expression. In terms of processing, phosphorylation on serine residues in the C-terminal is stimulated by binding CC chemokines especially by APO-RANTES. Post-translationally, O-glycosylated, but not N-glycosylated. Ser-6 appears to be the major site even if Ser-7 may be also O-glycosylated. Also sialylated glycans present which contribute to chemokine binding. Thr-16 and Ser-17 may also be glycosylated and, if so, with small moieties such as a T-antigen.

It localises to the cell membrane. Receptor for a number of inflammatory CC-chemokines including CCL3/MIP-1-alpha, CCL4/MIP-1-beta and RANTES and subsequently transduces a signal by increasing the intracellular calcium ion level. May play a role in the control of granulocytic lineage proliferation or differentiation. Participates in T-lymphocyte migration to the infection site by acting as a chemotactic receptor. The sequence is that of C-C chemokine receptor type 5 (CCR5) from Hylobates moloch (Silvery gibbon).